Consider the following 333-residue polypeptide: UDP-N-acetylenolpyruvoylglucosamine reductase (333 aa).

The FAD-binding PCMH-type domain maps to 12-176 (LPAQCRALIE…TSVVFRLPKD (165 aa)). Arg153 is an active-site residue. Ser221 serves as the catalytic Proton donor. Residue Glu317 is part of the active site.

This sequence belongs to the MurB family. The cofactor is FAD.

Its subcellular location is the cytoplasm. The catalysed reaction is UDP-N-acetyl-alpha-D-muramate + NADP(+) = UDP-N-acetyl-3-O-(1-carboxyvinyl)-alpha-D-glucosamine + NADPH + H(+). The protein operates within cell wall biogenesis; peptidoglycan biosynthesis. Functionally, cell wall formation. The sequence is that of UDP-N-acetylenolpyruvoylglucosamine reductase from Idiomarina loihiensis (strain ATCC BAA-735 / DSM 15497 / L2-TR).